A 624-amino-acid chain; its full sequence is Chaperone protein HtpG (624 aa).

The a; substrate-binding stretch occupies residues 1–341 (MAVKQFKAES…SPDLSLNISR (341 aa)). A b region spans residues 342–550 (ELLQHDRQLK…DGELSIEMEK (209 aa)). A c region spans residues 551–624 (VLKMMPDNNN…FANDVASLMK (74 aa)).

The protein belongs to the heat shock protein 90 family. In terms of assembly, homodimer.

It localises to the cytoplasm. In terms of biological role, molecular chaperone. Has ATPase activity. This is Chaperone protein HtpG from Clostridium acetobutylicum (strain ATCC 824 / DSM 792 / JCM 1419 / IAM 19013 / LMG 5710 / NBRC 13948 / NRRL B-527 / VKM B-1787 / 2291 / W).